The chain runs to 239 residues: MEFFNILQSACNDVNLDFNDKKYNQLISYKNLIQEWNKKINLTAIVEDDEIIKKHFIDCIKIFKSSPIGEAKSLIDIGTGAGFPGIPIKILKEDIEITLLDSLQKRINFLNTVIGELQLKNIQCLHGRAEDYAQEIQHRQKYDIAVSRAVANLAVLSEFCIPFVEKGGYFIAMKGPSVEEEITAATKSIEILGGKIEDIIKIDIEDTDLKHNLVIIKKVKETGKRYPRKPGIIKKNPLK.

Residues Gly-78, Phe-83, 129–130 (AE), and Arg-148 each bind S-adenosyl-L-methionine.

The protein belongs to the methyltransferase superfamily. RNA methyltransferase RsmG family.

It is found in the cytoplasm. In terms of biological role, specifically methylates the N7 position of a guanine in 16S rRNA. In Clostridium botulinum (strain ATCC 19397 / Type A), this protein is Ribosomal RNA small subunit methyltransferase G.